A 102-amino-acid chain; its full sequence is Heat shock protein HspQ (102 aa).

It belongs to the HspQ family.

It is found in the cytoplasm. Its function is as follows. Involved in the degradation of certain denaturated proteins, including DnaA, during heat shock stress. In Pectobacterium atrosepticum (strain SCRI 1043 / ATCC BAA-672) (Erwinia carotovora subsp. atroseptica), this protein is Heat shock protein HspQ.